Consider the following 148-residue polypeptide: Aspartate 1-decarboxylase (148 aa).

Serine 25 serves as the catalytic Schiff-base intermediate with substrate; via pyruvic acid. Serine 25 carries the post-translational modification Pyruvic acid (Ser). Threonine 57 provides a ligand contact to substrate. The active-site Proton donor is tyrosine 58. A substrate-binding site is contributed by 73 to 75 (GAA).

The protein belongs to the PanD family. Heterooctamer of four alpha and four beta subunits. Pyruvate serves as cofactor. In terms of processing, is synthesized initially as an inactive proenzyme, which is activated by self-cleavage at a specific serine bond to produce a beta-subunit with a hydroxyl group at its C-terminus and an alpha-subunit with a pyruvoyl group at its N-terminus.

It is found in the cytoplasm. The enzyme catalyses L-aspartate + H(+) = beta-alanine + CO2. The protein operates within cofactor biosynthesis; (R)-pantothenate biosynthesis; beta-alanine from L-aspartate: step 1/1. In terms of biological role, catalyzes the pyruvoyl-dependent decarboxylation of aspartate to produce beta-alanine. This chain is Aspartate 1-decarboxylase, found in Rhodococcus opacus (strain B4).